A 351-amino-acid chain; its full sequence is Protein Wnt-8a (351 aa).

Residues 1 to 24 (MGNLFMLWAALGICCAAFSASAWS) form the signal peptide. Cysteine 54 and cysteine 65 are oxidised to a cystine. Asparagine 103 carries N-linked (GlcNAc...) asparagine glycosylation. 10 cysteine pairs are disulfide-bonded: cysteine 104/cysteine 112, cysteine 114/cysteine 132, cysteine 180/cysteine 194, cysteine 182/cysteine 189, cysteine 259/cysteine 297, cysteine 275/cysteine 290, cysteine 294/cysteine 336, cysteine 312/cysteine 327, cysteine 314/cysteine 324, and cysteine 319/cysteine 320. Residue serine 186 is the site of O-palmitoleoyl serine attachment. Residues asparagine 262 and asparagine 281 are each glycosylated (N-linked (GlcNAc...) asparagine).

The protein belongs to the Wnt family. Forms a soluble 1:1 complex with AFM; this prevents oligomerization and is required for prolonged biological activity. The complex with AFM may represent the physiological form in body fluids. In terms of processing, palmitoleoylation is required for efficient binding to frizzled receptors. Depalmitoleoylation leads to Wnt signaling pathway inhibition. Post-translationally, proteolytic processing by TIKI1 and TIKI2 promotes oxidation and formation of large disulfide-bond oligomers, leading to inactivation of WNT8A.

Its subcellular location is the secreted. The protein resides in the extracellular space. The protein localises to the extracellular matrix. In terms of biological role, ligand for members of the frizzled family of seven transmembrane receptors. Plays a role in embryonic patterning. This Homo sapiens (Human) protein is Protein Wnt-8a (WNT8A).